The chain runs to 236 residues: Small ribosomal subunit protein uS2c (236 aa).

It belongs to the universal ribosomal protein uS2 family.

Its subcellular location is the plastid. This is Small ribosomal subunit protein uS2c (rps2) from Cuscuta obtusiflora (Peruvian dodder).